We begin with the raw amino-acid sequence, 151 residues long: MGRMHAPGKGISQSALPYRRSVPTWLKLTADDVKEQIFKLGKKGLTPSQIGVMLRDSHGVAQVRFVTGKKILRIMKAMGLAPDLPEDLYYLIKKAVAMRKHLERNRKDKDSKFRLILVESRIHRLARYYKTKSVLPPNWKYESSTASALVA.

The protein belongs to the universal ribosomal protein uS15 family.

This is Small ribosomal subunit protein uS15 (RpS13) from Spodoptera frugiperda (Fall armyworm).